The following is a 543-amino-acid chain: ATP synthase subunit alpha (543 aa).

174 to 181 lines the ATP pocket; that stretch reads GDRQTGKT. The interval 521 to 543 is disordered; sequence VEKKPDVDKAAPVDQEKIVAGEK.

Belongs to the ATPase alpha/beta chains family. F-type ATPases have 2 components, CF(1) - the catalytic core - and CF(0) - the membrane proton channel. CF(1) has five subunits: alpha(3), beta(3), gamma(1), delta(1), epsilon(1). CF(0) has three main subunits: a(1), b(2) and c(9-12). The alpha and beta chains form an alternating ring which encloses part of the gamma chain. CF(1) is attached to CF(0) by a central stalk formed by the gamma and epsilon chains, while a peripheral stalk is formed by the delta and b chains.

The protein localises to the cell membrane. It catalyses the reaction ATP + H2O + 4 H(+)(in) = ADP + phosphate + 5 H(+)(out). Produces ATP from ADP in the presence of a proton gradient across the membrane. The alpha chain is a regulatory subunit. This chain is ATP synthase subunit alpha, found in Bifidobacterium longum (strain DJO10A).